A 413-amino-acid polypeptide reads, in one-letter code: MSATATTTVVEPPTTTLTGATEPPFTAYTTSQGLRVSPVPLPEHNTDVGFGALIENVDLNNLSDEQFEDIRKALFEHQVVCFPNQHNLPPETQYAITHRFDPESSTYGHGNRTNQQNNSILHPDLHTLPGVPQVQLIGHGVVKDHYGLEEVRLKHPHHRTFHRDPISEEEEKEKQVTRFYRWHIDAALYDYNPPVVTTLLAVNAPQGTQTLRYDDKSGHEMPVPLGSTAFASGYRMYELLTDEEKKVAARTRVQYFPHAYVTINKARALPNGLGMYSEGLELDKSELPPWEESRVKTFPLLWKNPVTGKLALQTHGCCAEKILIDNEDGTTTVIDDLPKVREILYNYQRPGINPERVYCHDWKNGDFVIFHNRGVTHCITGAYRDDQTRIFHQCNLAASHPPAGPSEEDIAAM.

Residues 1–18 (MSATATTTVVEPPTTTLT) are compositionally biased toward low complexity. Positions 1-24 (MSATATTTVVEPPTTTLTGATEPP) are disordered. Fe cation contacts are provided by His-183 and Asp-185. 2 residues coordinate 2-oxoglutarate: Thr-228 and Trp-362. His-377 is a Fe cation binding site. Arg-389 contributes to the 2-oxoglutarate binding site.

This sequence belongs to the TfdA dioxygenase family. Fe(2+) serves as cofactor.

The protein localises to the cytoplasm. Its subcellular location is the cytosol. It catalyses the reaction xanthine + 2-oxoglutarate + O2 = urate + succinate + CO2. Alpha-ketoglutarate-dependent xanthine dioxygenase is a non-heme mononuclear Fe(2+) enzyme that decarboxylates alpha-ketoglutarate to succinate and CO(2) while hydroxylating xanthine to generate uric acid. Allows xanthine utilization as a nitrogen source. The polypeptide is Alpha-ketoglutarate-dependent xanthine dioxygenase xan1 (xan1) (Schizosaccharomyces pombe (strain 972 / ATCC 24843) (Fission yeast)).